Reading from the N-terminus, the 483-residue chain is Probable cytosol aminopeptidase (483 aa).

Mn(2+) is bound by residues K245 and D250. K257 is a catalytic residue. The Mn(2+) site is built by D268, D327, and E329. R331 is a catalytic residue.

It belongs to the peptidase M17 family. Mn(2+) is required as a cofactor.

Its subcellular location is the cytoplasm. It carries out the reaction Release of an N-terminal amino acid, Xaa-|-Yaa-, in which Xaa is preferably Leu, but may be other amino acids including Pro although not Arg or Lys, and Yaa may be Pro. Amino acid amides and methyl esters are also readily hydrolyzed, but rates on arylamides are exceedingly low.. It catalyses the reaction Release of an N-terminal amino acid, preferentially leucine, but not glutamic or aspartic acids.. Presumably involved in the processing and regular turnover of intracellular proteins. Catalyzes the removal of unsubstituted N-terminal amino acids from various peptides. The chain is Probable cytosol aminopeptidase from Wolinella succinogenes (strain ATCC 29543 / DSM 1740 / CCUG 13145 / JCM 31913 / LMG 7466 / NCTC 11488 / FDC 602W) (Vibrio succinogenes).